A 117-amino-acid chain; its full sequence is Ubiquitin-like protein pmt3/smt3 (117 aa).

Residues 1-37 form a disordered region; sequence MSESPSANISDADKSAITPTTGDTSQQDVKPSTEHIN. Positions 17-30 are enriched in polar residues; sequence ITPTTGDTSQQDVK. Residues 35–115 form the Ubiquitin-like domain; that stretch reads HINLKVVGQD…LEQLGGCTHL (81 aa). A Glycyl lysine isopeptide (Gly-Lys) (interchain with K-? in acceptor proteins) cross-link involves residue Gly111. The propeptide occupies 112–117; that stretch reads CTHLCL.

This sequence belongs to the ubiquitin family. SUMO subfamily. As to quaternary structure, interacts with rfp1.

The protein resides in the nucleus. In terms of biological role, required for chromosome segregation where it may be involved in microtubule assembly. Loss of smt3 leads to an increase in telomere length. The polypeptide is Ubiquitin-like protein pmt3/smt3 (pmt3) (Schizosaccharomyces pombe (strain 972 / ATCC 24843) (Fission yeast)).